The chain runs to 384 residues: Calreticulin-3 (384 aa).

A signal peptide spans 1–19 (MAAARVPLWAICVRRVALA). An N-domain region spans residues 20–197 (TVYFQEEFLD…GQSIESGSIE (178 aa)). A glycan (N-linked (GlcNAc...) asparagine) is linked at Asn42. Residues Cys105 and Cys137 are joined by a disulfide bond. An alpha-D-glucoside contacts are provided by Tyr109, Lys111, Tyr128, and Asp135. Repeat copies occupy residues 191-202 (IESGSIEYDWQL), 209-220 (EKASAEAEGWDQ), 222-231 (AKDKSQDWEK), 235-246 (DASASKPSDWKG), 250-260 (GDWQAAMLQKP), 264-272 (DGLKPEGID), and 274-284 (DVWLHQKMKNS). The 4 X approximate repeats stretch occupies residues 191 to 246 (IESGSIEYDWQLTSLKKMEKASAEAEGWDQAAKDKSQDWEKHFLDASASKPSDWKG). A P-domain region spans residues 198–294 (YDWQLTSLKK…YLTEYDLSEF (97 aa)). A 3 X approximate repeats region spans residues 250–284 (GDWQAAMLQKPPYQDGLKPEGIDKDVWLHQKMKNS). Residues 295–384 (ENIGAVGLEL…FKGFHRRNEF (90 aa)) form a C-domain region. Glu303 contacts an alpha-D-glucoside. The short motif at 381-384 (RNEF) is the Prevents secretion from ER element.

The protein belongs to the calreticulin family. In terms of assembly, component of an EIF2 complex at least composed of CELF1/CUGBP1, CALR, CALR3, EIF2S1, EIF2S2, HSP90B1 and HSPA5.

It is found in the endoplasmic reticulum lumen. During spermatogenesis, may act as a lectin-independent chaperone for specific client proteins such as ADAM3. CALR3 capacity for calcium-binding may be absent or much lower than that of CALR. Required for sperm fertility. The chain is Calreticulin-3 (CALR3) from Bos taurus (Bovine).